Reading from the N-terminus, the 91-residue chain is Acyl carrier protein AsbD (91 aa).

One can recognise a Carrier domain in the interval 4 to 82 (EALKNAVLKI…SLLDFMEELQ (79 aa)). Residue Ser-40 is modified to O-(pantetheine 4'-phosphoryl)serine.

It belongs to the acyl carrier protein (ACP) family. In terms of processing, activated by the transfer of a 4'-phosphopantetheine group from CoA to Ser-40.

Its pathway is siderophore biosynthesis; petrobactin biosynthesis. In terms of biological role, involved in the biosynthesis of petrobactin, a catecholate siderophore that functions in both iron acquisition and virulence. Aryl-carrier protein that activates 3,4-dihydroxybenzoate (3,4-DHBA) prior to its incorporation into petrobactin. In Bacillus anthracis, this protein is Acyl carrier protein AsbD.